The primary structure comprises 240 residues: ATP synthase subunit a 1 (240 aa).

Helical transmembrane passes span 23–43, 82–102, 120–140, 186–206, and 207–227; these read GQVL…SVLA, VPFI…GALF, DINT…YAGF, LVVA…VMLL, and GLFT…AYIH.

Belongs to the ATPase A chain family. In terms of assembly, F-type ATPases have 2 components, CF(1) - the catalytic core - and CF(0) - the membrane proton channel. CF(1) has five subunits: alpha(3), beta(3), gamma(1), delta(1), epsilon(1). CF(0) has four main subunits: a, b, b' and c.

It is found in the cellular thylakoid membrane. In terms of biological role, key component of the proton channel; it plays a direct role in the translocation of protons across the membrane. The chain is ATP synthase subunit a 1 from Acaryochloris marina (strain MBIC 11017).